Here is a 333-residue protein sequence, read N- to C-terminus: Nucleoid-associated protein HAPS_0704 (333 aa).

Belongs to the YejK family.

Its subcellular location is the cytoplasm. It is found in the nucleoid. The sequence is that of Nucleoid-associated protein HAPS_0704 from Glaesserella parasuis serovar 5 (strain SH0165) (Haemophilus parasuis).